We begin with the raw amino-acid sequence, 138 residues long: MYIEQHSRYQNKANNIQLEYDDRQFHTTVIKDVLLWIEHNLDQSLLLDDVANKAGYTKWYFQRLFKKVTGVTLASYIRARRLTKAAVELRLTKKTILEIALKYQFDSQQSFTRRFKYIFKVTPSYYRRNKLWELEAMH.

One can recognise an HTH araC/xylS-type domain in the interval 31–129; the sequence is KDVLLWIEHN…KVTPSYYRRN (99 aa). DNA-binding regions (H-T-H motif) lie at residues 48–69 and 96–119; these read DDVA…KKVT and ILEI…KYIF.

This chain is Transposon Tn10 TetD protein (tetD), found in Escherichia coli.